The primary structure comprises 837 residues: Outer membrane usher protein HifC (837 aa).

Positions 1-26 are cleaved as a signal peptide; it reads MKTKIFPLNKIAFACSLLLANPLAWA. A disulfide bridge links C813 with C833.

This sequence belongs to the fimbrial export usher family.

The protein localises to the cell outer membrane. Its function is as follows. Essential for piliation. The polypeptide is Outer membrane usher protein HifC (hifC) (Haemophilus influenzae).